A 160-amino-acid polypeptide reads, in one-letter code: Large ribosomal subunit protein uL16 (160 aa).

The segment at 138–160 (KNLENSSQENTKDSKKSQEEVKQ) is disordered. Positions 147–160 (NTKDSKKSQEEVKQ) are enriched in basic and acidic residues.

This sequence belongs to the universal ribosomal protein uL16 family. In terms of assembly, part of the 50S ribosomal subunit.

Binds 23S rRNA and is also seen to make contacts with the A and possibly P site tRNAs. This Prochlorococcus marinus (strain AS9601) protein is Large ribosomal subunit protein uL16.